The sequence spans 80 residues: Exodeoxyribonuclease 7 small subunit (80 aa).

The protein belongs to the XseB family. As to quaternary structure, heterooligomer composed of large and small subunits.

The protein localises to the cytoplasm. It catalyses the reaction Exonucleolytic cleavage in either 5'- to 3'- or 3'- to 5'-direction to yield nucleoside 5'-phosphates.. Functionally, bidirectionally degrades single-stranded DNA into large acid-insoluble oligonucleotides, which are then degraded further into small acid-soluble oligonucleotides. The chain is Exodeoxyribonuclease 7 small subunit from Streptomyces avermitilis (strain ATCC 31267 / DSM 46492 / JCM 5070 / NBRC 14893 / NCIMB 12804 / NRRL 8165 / MA-4680).